Here is a 210-residue protein sequence, read N- to C-terminus: 2-Cys peroxiredoxin BAS1, chloroplastic (210 aa).

The transit peptide at 1–10 directs the protein to the chloroplast; sequence DARARSFVAR. The Thioredoxin domain maps to 18-177; the sequence is PLVGNKAPDF…TLRTLQALQY (160 aa). Cys-64 serves as the catalytic Cysteine sulfenic acid (-SOH) intermediate.

It belongs to the peroxiredoxin family. AhpC/Prx1 subfamily. In terms of assembly, homodimer; disulfide-linked, upon oxidation. As to expression, expressed in leaf blade, sheath, basiplast, stem and green spike. Maximal expression in young developing shoots segments where cell division and elongation take place. Not expressed in roots.

Its subcellular location is the plastid. It localises to the chloroplast. The enzyme catalyses a hydroperoxide + [thioredoxin]-dithiol = an alcohol + [thioredoxin]-disulfide + H2O. Its function is as follows. Thiol-specific peroxidase that catalyzes the reduction of hydrogen peroxide and organic hydroperoxides to water and alcohols, respectively. Plays a role in cell protection against oxidative stress by detoxifying peroxides. May be an antioxidant enzyme particularly in the developing shoot and photosynthesizing leaf. The chain is 2-Cys peroxiredoxin BAS1, chloroplastic (BAS1) from Hordeum vulgare (Barley).